A 329-amino-acid polypeptide reads, in one-letter code: Ribosomal RNA small subunit methyltransferase H (329 aa).

S-adenosyl-L-methionine is bound by residues G46–H48, D65, F92, D113, and H120. Residues R295–A329 form a disordered region. Positions R317–A329 are enriched in basic and acidic residues.

Belongs to the methyltransferase superfamily. RsmH family.

The protein localises to the cytoplasm. It carries out the reaction cytidine(1402) in 16S rRNA + S-adenosyl-L-methionine = N(4)-methylcytidine(1402) in 16S rRNA + S-adenosyl-L-homocysteine + H(+). Functionally, specifically methylates the N4 position of cytidine in position 1402 (C1402) of 16S rRNA. This Acidothermus cellulolyticus (strain ATCC 43068 / DSM 8971 / 11B) protein is Ribosomal RNA small subunit methyltransferase H.